Consider the following 1119-residue polypeptide: Period circadian protein homolog 3 (1119 aa).

Residues 1 to 48 (MDPCGNPAVPGGDCPQTRGPGLQGSSGQEGPLQGICVDSSHSEHEDRN) are disordered. The Nuclear export signal 1 signature appears at 54–63 (LIMVVQEMKK). PAS domains lie at 120–187 (LASE…PTQL) and 259–325 (YEAP…KVLK). The PAC domain maps to 334–377 (HSPIRFCTQNGDYVILDSSWSSFVNPWSRKVSFIIGRHKVRTSP). The Nuclear export signal 3 motif lies at 400-409 (LQEQIHRLLL). Over residues 419-428 (GYGSLGSSGS) the composition is skewed to low complexity. Disordered regions lie at residues 419-449 (GYGS…VEEA), 483-530 (VKPV…SSSY), 718-744 (HSRC…SSSS), and 878-910 (LEPT…SRSS). Polar residues-rich tracts occupy residues 429 to 442 (QEQH…SESS) and 491 to 515 (TEPQ…STDT). The interval 551 to 750 (LKRKCISCTN…SSSSAHLCPH (200 aa)) is CSNK1E binding domain. The Nuclear localization signal motif lies at 720 to 739 (RCAGSERRKHKRKKLPTPVD). Residues 885–903 (HGPRRVEENWETHSEEEHP) show a composition bias toward basic and acidic residues. Residue S907 is modified to Phosphoserine. The Nuclear export signal 2 signature appears at 913 to 920 (LQLNLLQE). Residues 947-1011 (GNSGSRSPPC…QDTHRDRAFS (65 aa)) are disordered. Over residues 970–988 (SPSAAASGSSASSVHGSGS) the composition is skewed to low complexity. The span at 989-1001 (DYTSEVSENGQRS) shows a compositional bias: polar residues. The interval 1037-1119 (ERGRDTVLRE…VQQKTPVEQL (83 aa)) is CRY binding domain.

In terms of assembly, homodimer. Component of the circadian core oscillator, which includes the CRY proteins, CLOCK or NPAS2, BMAL1 or BMAL2, CSNK1D and/or CSNK1E, TIMELESS and the PER proteins. Interacts directly with PER1, PER2, CRY1, CRY2, and TIMELESS; interaction with CRY1 and CRY2 is weak and not rhythmic. Interacts with FBXW11 and BTRC. Phosphorylation by CSNK1E is weak and appears to require association with PER1 and translocation to the nucleus. In terms of processing, ubiquitinated.

The protein localises to the cytoplasm. The protein resides in the nucleus. In terms of biological role, originally described as a core component of the circadian clock. The circadian clock, an internal time-keeping system, regulates various physiological processes through the generation of approximately 24 hour circadian rhythms in gene expression, which are translated into rhythms in metabolism and behavior. It is derived from the Latin roots 'circa' (about) and 'diem' (day) and acts as an important regulator of a wide array of physiological functions including metabolism, sleep, body temperature, blood pressure, endocrine, immune, cardiovascular, and renal function. Consists of two major components: the central clock, residing in the suprachiasmatic nucleus (SCN) of the brain, and the peripheral clocks that are present in nearly every tissue and organ system. Both the central and peripheral clocks can be reset by environmental cues, also known as Zeitgebers (German for 'timegivers'). The predominant Zeitgeber for the central clock is light, which is sensed by retina and signals directly to the SCN. The central clock entrains the peripheral clocks through neuronal and hormonal signals, body temperature and feeding-related cues, aligning all clocks with the external light/dark cycle. Circadian rhythms allow an organism to achieve temporal homeostasis with its environment at the molecular level by regulating gene expression to create a peak of protein expression once every 24 hours to control when a particular physiological process is most active with respect to the solar day. Transcription and translation of core clock components (CLOCK, NPAS2, BMAL1, BMAL2, PER1, PER2, PER3, CRY1 and CRY2) plays a critical role in rhythm generation, whereas delays imposed by post-translational modifications (PTMs) are important for determining the period (tau) of the rhythms (tau refers to the period of a rhythm and is the length, in time, of one complete cycle). A diurnal rhythm is synchronized with the day/night cycle, while the ultradian and infradian rhythms have a period shorter and longer than 24 hours, respectively. Disruptions in the circadian rhythms contribute to the pathology of cardiovascular diseases, cancer, metabolic syndromes and aging. A transcription/translation feedback loop (TTFL) forms the core of the molecular circadian clock mechanism. Transcription factors, CLOCK or NPAS2 and BMAL1 or BMAL2, form the positive limb of the feedback loop, act in the form of a heterodimer and activate the transcription of core clock genes and clock-controlled genes (involved in key metabolic processes), harboring E-box elements (5'-CACGTG-3') within their promoters. The core clock genes: PER1/2/3 and CRY1/2 which are transcriptional repressors form the negative limb of the feedback loop and interact with the CLOCK|NPAS2-BMAL1|BMAL2 heterodimer inhibiting its activity and thereby negatively regulating their own expression. This heterodimer also activates nuclear receptors NR1D1, NR1D2, RORA, RORB and RORG, which form a second feedback loop and which activate and repress BMAL1 transcription, respectively. Has a redundant role with the other PER proteins PER1 and PER2 and is not essential for the circadian rhythms maintenance. In contrast, plays an important role in sleep-wake timing and sleep homeostasis probably through the transcriptional regulation of sleep homeostasis-related genes, without influencing circadian parameters. Can bind heme. The sequence is that of Period circadian protein homolog 3 (Per3) from Rattus norvegicus (Rat).